The chain runs to 430 residues: MANVVVVGAQWGDEGKGKIVDWLSEQADIVARFQGGHNAGHTLVINGETYKLALLPSGVLRPSKLAVIGNGVVFDPQAFLDEVERLTKQGVAISPENLRVAENVTLILPLHRELDALRENASKATSIGTTQRGIGPAYEDKVGRRAIRLMDLADIDTLPHKIERLLTHHNALRRGLGLSEFEAGAILKELTALAPRLLPYAETVWRLLDIKRREGKRILFEGAQGALLDVDHGTYPYVTSSNTVAAQAATGTGMGPGSVGYVLGICKAYTTRVGQGPFPTELDNEIGRKIGERGREFGTNTGRPRRCGWFDAVLVRQTVRTCGIHGLALTKLDILDGFDSIEVCVGYMLDGKEIDHLPAGEGAQARVVPIYETIEGWKEPTANARSWADLPAQAVKYVRRVEELVGCPIALLSTSPEREDTILVQNPFEA.

GTP contacts are provided by residues 12-18 (GDEGKGK) and 40-42 (GHT). The active-site Proton acceptor is Asp13. Positions 13 and 40 each coordinate Mg(2+). Residues 13 to 16 (DEGK), 38 to 41 (NAGH), Thr130, Arg144, Gln224, Thr239, and Arg303 contribute to the IMP site. Catalysis depends on His41, which acts as the Proton donor. A substrate-binding site is contributed by 299-305 (TNTGRPR). GTP contacts are provided by residues Arg305, 331–333 (KLD), and 413–415 (STS).

It belongs to the adenylosuccinate synthetase family. In terms of assembly, homodimer. Mg(2+) is required as a cofactor.

Its subcellular location is the cytoplasm. It carries out the reaction IMP + L-aspartate + GTP = N(6)-(1,2-dicarboxyethyl)-AMP + GDP + phosphate + 2 H(+). It functions in the pathway purine metabolism; AMP biosynthesis via de novo pathway; AMP from IMP: step 1/2. In terms of biological role, plays an important role in the de novo pathway of purine nucleotide biosynthesis. Catalyzes the first committed step in the biosynthesis of AMP from IMP. The sequence is that of Adenylosuccinate synthetase from Rhodopseudomonas palustris (strain BisB5).